The primary structure comprises 381 residues: Alkanesulfonate monooxygenase (381 aa).

The protein belongs to the SsuD family. As to quaternary structure, homotetramer.

It catalyses the reaction an alkanesulfonate + FMNH2 + O2 = an aldehyde + FMN + sulfite + H2O + 2 H(+). Functionally, catalyzes the desulfonation of aliphatic sulfonates. The polypeptide is Alkanesulfonate monooxygenase (Escherichia coli O17:K52:H18 (strain UMN026 / ExPEC)).